Here is a 73-residue protein sequence, read N- to C-terminus: MWAGKGKKPETGLLSNSFSRERAKGQYFSLESSQSWQLFRSISRSQNCGSHSSFCSIENCECEYGTNAIDALI.

This is an uncharacterized protein from Saccharomyces cerevisiae (strain ATCC 204508 / S288c) (Baker's yeast).